A 1680-amino-acid polypeptide reads, in one-letter code: RAF-like serine/threonine-protein kinase PRAF (1680 aa).

The disordered stretch occupies residues 86 to 163 (FSPSDPHNSV…TPSDDGKDFP (78 aa)). The PB1 domain maps to 166-267 (RVKFMCSFGG…SRLRVFLFPA (102 aa)). Disordered regions lie at residues 363 to 388 (LTGN…PLLA), 417 to 516 (PQYT…DSQQ), 556 to 580 (PDML…QPQQ), 594 to 613 (GANH…SQQF), 641 to 672 (QSTS…PQLQ), 700 to 725 (RSFR…LHRQ), and 1186 to 1226 (LPNA…LGGQ). Residues 366–388 (NLSNRSNAPSAPSSAPSSPPLLA) are compositionally biased toward low complexity. A compositionally biased stretch (basic and acidic residues) spans 446–482 (HEMHYRSTDSRRGPESPPKKFHDALHQDHPITVEQRR). Composition is skewed to low complexity over residues 560-580 (QSSG…QPQQ) and 603-613 (QGDQQQQSQQF). Polar residues predominate over residues 641–651 (QSTSYHGSAPS). Residues 1204–1217 (SRSSSSSLSELSKS) are compositionally biased toward low complexity. Ser-1248 carries the phosphoserine modification. Over residues 1339-1354 (ASTVDKENQEEVRTGL) the composition is skewed to basic and acidic residues. The segment at 1339-1372 (ASTVDKENQEEVRTGLDEPADEDKANSTGLGSDP) is disordered. Ser-1365 bears the Phosphoserine mark. Residues 1389-1655 (LEELRELGSG…SDIAKELRTM (267 aa)) enclose the Protein kinase domain. Residues 1395–1403 (LGSGTFGTV) and Lys-1416 each bind ATP. The Proton acceptor role is filled by Asp-1518. The interval 1661-1680 (PKTQAQTQGQSHPHPQMQIV) is disordered.

The protein belongs to the protein kinase superfamily. Ser/Thr protein kinase family. Hyperphosphorylated in response to auxin. Its phosphorylation state is also rapidly stimulated by photosynthetic activity (e.g. in response to blue light and red light irradiation); dephosphorylated in the darkness.

It is found in the cytoplasm. The enzyme catalyses L-seryl-[protein] + ATP = O-phospho-L-seryl-[protein] + ADP + H(+). The catalysed reaction is L-threonyl-[protein] + ATP = O-phospho-L-threonyl-[protein] + ADP + H(+). Activated by auxin via rapid phosphorylation. Regulated by photosynthesis-activity-dependent changes in its phosphorylation status. Functionally, RAF-like protein kinase acting as a central mediator of a fast response pathway to auxin involving proteins phosphorylation, and leading to rapid cellular responses including membrane depolarization and cytoplasmic streaming. Required for general growth and developmental process. Photosynthesis signaling kinase involved in the regulation of the sucrose metabolism involving PGM1. Necessary for optimal chloroplast electron transport rate (ETR). This Marchantia polymorpha (Common liverwort) protein is RAF-like serine/threonine-protein kinase PRAF.